A 69-amino-acid polypeptide reads, in one-letter code: Brevinin-1Pb (69 aa).

Positions 1–20 (MFTLNKFLLLLFFLGTINLS) are cleaved as a signal peptide. Residues 21 to 43 (FCEEENAEEERIDEPDETDVEVE) constitute a propeptide that is removed on maturation. The cysteines at positions 63 and 69 are disulfide-linked.

As to expression, expressed by the skin glands.

It is found in the secreted. Antibacterial activity against Gram-positive bacterium S.aureus and Gram-negative bacterium E.coli. Has activity against C.albicans. This is Brevinin-1Pb from Lithobates pipiens (Northern leopard frog).